Reading from the N-terminus, the 743-residue chain is 1,4-alpha-glucan branching enzyme GlgB (743 aa).

The Nucleophile role is filled by aspartate 423. Glutamate 476 functions as the Proton donor in the catalytic mechanism.

This sequence belongs to the glycosyl hydrolase 13 family. GlgB subfamily. Monomer.

It carries out the reaction Transfers a segment of a (1-&gt;4)-alpha-D-glucan chain to a primary hydroxy group in a similar glucan chain.. It functions in the pathway glycan biosynthesis; glycogen biosynthesis. Catalyzes the formation of the alpha-1,6-glucosidic linkages in glycogen by scission of a 1,4-alpha-linked oligosaccharide from growing alpha-1,4-glucan chains and the subsequent attachment of the oligosaccharide to the alpha-1,6 position. This Pseudomonas fluorescens (strain Pf0-1) protein is 1,4-alpha-glucan branching enzyme GlgB.